The chain runs to 130 residues: Glycine cleavage system H protein (130 aa).

Positions 24–106 constitute a Lipoyl-binding domain; the sequence is IYSVGITEHA…YADGWLFRIR (83 aa). K65 bears the N6-lipoyllysine mark.

The protein belongs to the GcvH family. The glycine cleavage system is composed of four proteins: P, T, L and H. The cofactor is (R)-lipoate.

In terms of biological role, the glycine cleavage system catalyzes the degradation of glycine. The H protein shuttles the methylamine group of glycine from the P protein to the T protein. This chain is Glycine cleavage system H protein, found in Pectobacterium carotovorum subsp. carotovorum (strain PC1).